The sequence spans 355 residues: Protein-glutamate methylesterase/protein-glutamine glutaminase (355 aa).

In terms of domain architecture, Response regulatory spans 3–121; sequence NVLVVEDSPV…HPDHEATARK (119 aa). 4-aspartylphosphate is present on Asp54. Residues 154–348 enclose the CheB-type methylesterase domain; the sequence is PLLNRVAPAR…AALTNLVAER (195 aa). Active-site residues include Ser170, His197, and Asp290.

This sequence belongs to the CheB family. In terms of processing, phosphorylated by CheA. Phosphorylation of the N-terminal regulatory domain activates the methylesterase activity.

The protein resides in the cytoplasm. It carries out the reaction [protein]-L-glutamate 5-O-methyl ester + H2O = L-glutamyl-[protein] + methanol + H(+). The enzyme catalyses L-glutaminyl-[protein] + H2O = L-glutamyl-[protein] + NH4(+). Its function is as follows. Involved in chemotaxis. Part of a chemotaxis signal transduction system that modulates chemotaxis in response to various stimuli. Catalyzes the demethylation of specific methylglutamate residues introduced into the chemoreceptors (methyl-accepting chemotaxis proteins or MCP) by CheR. Also mediates the irreversible deamidation of specific glutamine residues to glutamic acid. The chain is Protein-glutamate methylesterase/protein-glutamine glutaminase from Nitrosospira multiformis (strain ATCC 25196 / NCIMB 11849 / C 71).